The primary structure comprises 314 residues: Small ribosomal subunit protein uS2 (314 aa).

2 stretches are compositionally biased toward basic and acidic residues: residues 244-265 (GGHD…GHKD) and 271-287 (DRRG…EDRA). Residues 244 to 314 (GGHDERREQE…AAPEAAPAKE (71 aa)) are disordered. Residues 302–314 (APAAAPEAAPAKE) are compositionally biased toward low complexity.

This sequence belongs to the universal ribosomal protein uS2 family.

This is Small ribosomal subunit protein uS2 from Anaeromyxobacter dehalogenans (strain 2CP-C).